Reading from the N-terminus, the 62-residue chain is Excisionase (62 aa).

The chain is Excisionase (xis) from Streptomyces ambofaciens.